A 657-amino-acid polypeptide reads, in one-letter code: Endoplasmic reticulum chaperone BiP homolog (657 aa).

A signal peptide spans 1–17; sequence MKVFSLILIAFVANAYC. Residues 38–41, Lys99, 229–231, 295–302, and 366–369 each bind ATP; these read GTTY, GGT, EKAKRALS, and GSTR. The tract at residues 128–282 is nucleotide-binding (NBD); that stretch reads KPNVEVKVGS…KKKSGKDLRK (155 aa). The tract at residues 402–502 is substrate-binding (SBD); sequence VQAGVIGGVE…PRGVPQIEVT (101 aa). Residues 607-657 are disordered; that stretch reads LGSNQDASTEENKEQKKELESVVQPIVSKLYSAGGQGEQASEEPSEDHDEL. Positions 616 to 626 are enriched in basic and acidic residues; sequence EENKEQKKELE. Acidic residues predominate over residues 646-657; sequence ASEEPSEDHDEL. A Prevents secretion from ER motif is present at residues 654 to 657; sequence HDEL.

This sequence belongs to the heat shock protein 70 family.

It localises to the endoplasmic reticulum lumen. The catalysed reaction is ATP + H2O = ADP + phosphate + H(+). Its activity is regulated as follows. The chaperone activity is regulated by ATP-induced allosteric coupling of the nucleotide-binding (NBD) and substrate-binding (SBD) domains. In the ADP-bound and nucleotide-free (apo) states, the two domains have little interaction. In contrast, in the ATP-bound state the two domains are tightly coupled, which results in drastically accelerated kinetics in both binding and release of polypeptide substrates. J domain-containing co-chaperones stimulate the ATPase activity and are required for efficient substrate recognition. Functionally, endoplasmic reticulum chaperone that plays a key role in protein folding and quality control in the endoplasmic reticulum lumen. Required for ER dynamics during the first embryonic cell divisions. Specifically, controls ER transition into sheet-like structures at the onset of mitosis, possibly by regulating homotypic membrane fusion. In Caenorhabditis elegans, this protein is Endoplasmic reticulum chaperone BiP homolog (hsp-4).